A 71-amino-acid polypeptide reads, in one-letter code: Protein PSY2 (71 aa).

A signal peptide spans 1-20 (MSFGTRLLLFLILTLPLVTS). Positions 21–46 (SSPNTLHVSGIVKTGTTSRFLMMTIE) are excised as a propeptide. Tyr48 is modified (sulfotyrosine). Residues 50–71 (DPSANTRHDPSVPTNAKADTTP) form a disordered region. Positions 61–71 (VPTNAKADTTP) are enriched in polar residues. Pro62 is modified (4-hydroxyproline). O-linked (Ara...) hydroxyproline glycosylation occurs at Pro62. The propeptide occupies 65-71 (AKADTTP).

The protein belongs to the sulfated-peptide plant hormone family. In terms of processing, the sulfation and the glycosylation are required for full activity.

The protein resides in the secreted. Promotes cellular proliferation and expansion. The polypeptide is Protein PSY2 (PSY2) (Arabidopsis thaliana (Mouse-ear cress)).